Here is an 874-residue protein sequence, read N- to C-terminus: Leucine--tRNA ligase (874 aa).

The 'HIGH' region signature appears at 47 to 57; sequence PYPSGKLHMGH. The short motif at 636–640 is the 'KMSKS' region element; it reads KMSKS. K639 is a binding site for ATP.

The protein belongs to the class-I aminoacyl-tRNA synthetase family.

It is found in the cytoplasm. The catalysed reaction is tRNA(Leu) + L-leucine + ATP = L-leucyl-tRNA(Leu) + AMP + diphosphate. The chain is Leucine--tRNA ligase from Acinetobacter baumannii (strain SDF).